The chain runs to 275 residues: Large ribosomal subunit protein uL2 (275 aa).

The disordered stretch occupies residues 223-275 (VAMNPVDHPHGGGEGRTGEAREPVSPWGTPSKGFKTRRNKRTNNMIVQRRKRK). Basic and acidic residues predominate over residues 229–244 (DHPHGGGEGRTGEARE).

It belongs to the universal ribosomal protein uL2 family. As to quaternary structure, part of the 50S ribosomal subunit. Forms a bridge to the 30S subunit in the 70S ribosome.

In terms of biological role, one of the primary rRNA binding proteins. Required for association of the 30S and 50S subunits to form the 70S ribosome, for tRNA binding and peptide bond formation. It has been suggested to have peptidyltransferase activity; this is somewhat controversial. Makes several contacts with the 16S rRNA in the 70S ribosome. The chain is Large ribosomal subunit protein uL2 from Bordetella petrii (strain ATCC BAA-461 / DSM 12804 / CCUG 43448).